Reading from the N-terminus, the 145-residue chain is Procyclic form-specific polypeptide B-alpha (145 aa).

The signal sequence occupies residues 1 to 27 (MAPRSLYLLAVLLFSANLFAGVGFAAA). The tract at residues 28–127 (AEGPEDKGLT…PEPEPGAATL (100 aa)) is disordered. Basic and acidic residues predominate over residues 31 to 52 (PEDKGLTKGGKGKGEKGTKVGA). 32 tandem repeats follow at residues 59–60 (DP), 61–62 (DP), 63–64 (EP), 65–66 (EP), 67–68 (EP), 69–70 (EP), 71–72 (EP), 73–74 (EP), 75–76 (EP), 77–78 (EP), 79–80 (EP), 81–82 (EP), 83–84 (EP), 85–86 (EP), 87–88 (EP), 89–90 (EP), 91–92 (EP), 93–94 (EP), 95–96 (EP), 97–98 (EP), 99–100 (EP), 101–102 (EP), 103–104 (EP), 105–106 (EP), 107–108 (EP), 109–110 (EP), 111–112 (EP), 113–114 (EP), 115–116 (EP), 117–118 (EP), 119–120 (EP), and 121–122 (EP). The segment at 59–122 (DPDPEPEPEP…EPEPEPEPEP (64 aa)) is 32 X 2 AA tandem repeats of [DE]-P. Over residues 60 to 120 (PDPEPEPEPE…EPEPEPEPEP (61 aa)) the composition is skewed to acidic residues. The GPI-anchor amidated glycine moiety is linked to residue Gly-123. A propeptide spanning residues 124–145 (AATLKSVALPFAIAAAALVAAF) is cleaved from the precursor.

It localises to the cell membrane. Functionally, major surface antigen of procyclic forms. The chain is Procyclic form-specific polypeptide B-alpha (PARPB) from Trypanosoma brucei brucei.